Consider the following 186-residue polypeptide: Large ribosomal subunit protein bL12c (186 aa).

Over residues 1 to 11 the composition is skewed to polar residues; sequence MASTLSTITLR. The tract at residues 1-24 is disordered; the sequence is MASTLSTITLRSPSPSTATSTHAS. Residues 1-53 constitute a chloroplast transit peptide; it reads MASTLSTITLRSPSPSTATSTHASIPFPKKTLEFPIRTPKLQNRRATFLRPLA. A compositionally biased stretch (low complexity) spans 12–24; it reads SPSPSTATSTHAS.

This sequence belongs to the bacterial ribosomal protein bL12 family.

Its subcellular location is the plastid. The protein resides in the chloroplast. The sequence is that of Large ribosomal subunit protein bL12c from Nicotiana sylvestris (Wood tobacco).